The primary structure comprises 483 residues: Altronate oxidoreductase (483 aa).

Ile-18–Ala-29 lines the NAD(+) pocket.

Belongs to the mannitol dehydrogenase family. UxaB subfamily.

It carries out the reaction D-altronate + NAD(+) = keto-D-tagaturonate + NADH + H(+). It functions in the pathway carbohydrate metabolism; pentose and glucuronate interconversion. This Escherichia coli (strain 55989 / EAEC) protein is Altronate oxidoreductase.